The sequence spans 552 residues: Protein FAM234A (552 aa).

Positions 1-40 (MMDDKDLEAEIHPLKNEDKKSQENLGNLPKTEDNLKNKPV) are disordered. The Cytoplasmic portion of the chain corresponds to 1–49 (MMDDKDLEAEIHPLKNEDKKSQENLGNLPKTEDNLKNKPVPSRLSRCRT). Residues 8 to 22 (EAEIHPLKNEDKKSQ) are compositionally biased toward basic and acidic residues. At S21 the chain carries Phosphoserine. The chain crosses the membrane as a helical; Signal-anchor for type II membrane protein span at residues 50–70 (VAFFLSLFICLFVVFVLSFII). The Extracellular portion of the chain corresponds to 71–552 (PCPDRPSSED…FSRLRYRSEV (482 aa)). 4 N-linked (GlcNAc...) asparagine glycosylation sites follow: N116, N119, N314, and N473.

It belongs to the FAM234 family.

It localises to the membrane. The polypeptide is Protein FAM234A (Fam234a) (Rattus norvegicus (Rat)).